The following is a 496-amino-acid chain: Matrilin-1 (496 aa).

An N-terminal signal peptide occupies residues 1-22 (MRVLSGTSLMLCSLLLLLQALC). In terms of domain architecture, VWFA 1 spans 23–222 (SPGLAPQSRG…SRKFQEAFCV (200 aa)). Residue asparagine 76 is glycosylated (N-linked (GlcNAc...) asparagine). An EGF-like domain is found at 223 to 263 (VSDLCATGDHDCEQVCISSPGSYTCACHEGFTLNSDGKTCN). 3 disulfide bridges follow: cysteine 227-cysteine 238, cysteine 234-cysteine 247, and cysteine 249-cysteine 262. The region spanning 264 to 453 (VCSGGGGSSA…GKKLQKKICV (190 aa)) is the VWFA 2 domain. Asparagine 344 carries N-linked (GalNAc...) asparagine glycosylation. Positions 467–495 (QAKVEGLLQALTRKLEAVSKRLAILENTV) form a coiled coil.

As to quaternary structure, homotrimer. Part of a complex composed of MATN1 (via VWFA1 domain), type 2 collagens and type 6 collagens. Forms a complex (via covalent bonds) with ACAN; the interaction increases in abundance with increasing age of the organism via an increase in occupancy of MATN1 binding sites. Interacts with COMP. N-glycosylated; reduces binding affinity for type 2 collagens.

The protein localises to the secreted. It is found in the extracellular space. Its subcellular location is the extracellular matrix. A major component of the extracellular matrix of non-articular cartilage. Binds to type 2 collagens and forms long concatenated protein networks as part of the extracellular matrix. Required for the network-like organization and bundling of collagen fibrils surrounding chondrocytes in the zones of maturation and hypertrophy. Required for mechanotransduction and adaption to mechanical loading in cartilage chondrocytes, resulting in an increase in expression of the extracellular matrix components ACAN and COL2A1. Acts as a moderator of angiogenesis in response to injury. This Homo sapiens (Human) protein is Matrilin-1.